The sequence spans 315 residues: Ribosomal RNA small subunit methyltransferase H (315 aa).

S-adenosyl-L-methionine contacts are provided by residues 33–35, D52, F84, D106, and Q113; that span reads GGH. The tract at residues 290–315 is disordered; it reads PITASTSELENNNRSHSAKLRVAEKL. Residues 292–304 are compositionally biased toward polar residues; the sequence is TASTSELENNNRS.

Belongs to the methyltransferase superfamily. RsmH family.

It is found in the cytoplasm. It catalyses the reaction cytidine(1402) in 16S rRNA + S-adenosyl-L-methionine = N(4)-methylcytidine(1402) in 16S rRNA + S-adenosyl-L-homocysteine + H(+). Functionally, specifically methylates the N4 position of cytidine in position 1402 (C1402) of 16S rRNA. The protein is Ribosomal RNA small subunit methyltransferase H of Lactobacillus helveticus (strain DPC 4571).